The primary structure comprises 370 residues: Leucine-rich repeat-containing protein 19 (370 aa).

The first 24 residues, 1–24, serve as a signal peptide directing secretion; sequence MKVTGITILFWPLSMILLSDKIQS. The Extracellular segment spans residues 25–270; that stretch reads SKREVQCNFT…SEHEPLGKSW (246 aa). N-linked (GlcNAc...) asparagine glycosylation is found at N32, N37, N62, and N95. LRR repeat units follow at residues 46–71, 72–95, 96–119, 120–143, and 145–168; these read KKDV…VLQT, YFLL…GFGN, LSSL…AFLG, LNKL…VFVP, and RSLK…LFHL. The 52-residue stretch at 176–227 folds into the LRRCT domain; sequence NLWNCSCSLFNLQNWLNTSNVTLENENITMCSYPNSLQSYNIKTVPHKAECH. N-linked (GlcNAc...) asparagine glycans are attached at residues N179, N192, N195, N202, N251, and N256. The helical transmembrane segment at 271–291 threads the bilayer; sequence AFLVGVVVTVLTTSLLIFIAI. The Cytoplasmic segment spans residues 292–370; the sequence is KCPIWYNILL…IDIHELCEEN (79 aa).

As to quaternary structure, interacts with TRAF2 and TRAF6. In terms of tissue distribution, expressed in renal collecting duct epithelial cells.

The protein localises to the membrane. With respect to regulation, activated by TLR ligands such as LPS, bacterial DNA and peptidoglycan. In terms of biological role, pathogen-recognition receptor which mediates the activation of TRAF2- and TRAF6 NF-kappa-B signaling pathways and induces the expression of pro-inflammatory cytokines. In kidney, prevents infection by uropathogenic bacteria by inducing the production of cytokines, chemokines and antimicrobial substances. In gut, involved in host-microbiota interactions, plays a critical role in promoting the recruitment of immune cells and intestinal inflammation. In Homo sapiens (Human), this protein is Leucine-rich repeat-containing protein 19.